Consider the following 740-residue polypeptide: Elongation factor 2 (740 aa).

The 246-residue stretch at 18–263 folds into the tr-type G domain; sequence EQVRNIGIIA…MVVRWVPNPR (246 aa). GTP contacts are provided by residues 27–34, 93–97, and 147–150; these read AHVDHGKT, DTPGH, and NKVD. H606 is modified (diphthamide).

The protein belongs to the TRAFAC class translation factor GTPase superfamily. Classic translation factor GTPase family. EF-G/EF-2 subfamily.

The protein resides in the cytoplasm. In terms of biological role, catalyzes the GTP-dependent ribosomal translocation step during translation elongation. During this step, the ribosome changes from the pre-translocational (PRE) to the post-translocational (POST) state as the newly formed A-site-bound peptidyl-tRNA and P-site-bound deacylated tRNA move to the P and E sites, respectively. Catalyzes the coordinated movement of the two tRNA molecules, the mRNA and conformational changes in the ribosome. The polypeptide is Elongation factor 2 (Ignicoccus hospitalis (strain KIN4/I / DSM 18386 / JCM 14125)).